A 60-amino-acid polypeptide reads, in one-letter code: Metallothionein (60 aa).

A beta region spans residues 1 to 28 (MDCACATGGSCSCAGSCKCENCKCTSCK). Positions 3, 5, 11, 13, 17, 19, 22, 24, 27, 31, 32, 34, 35, 39, 42, 46, 48, 56, 58, and 59 each coordinate a divalent metal cation. Positions 29 to 60 (KSCCSCCPSECEKCGQGCVCKGGSSEKCSCCN) are alpha.

The protein belongs to the metallothionein superfamily. Type 1 family.

In terms of biological role, metallothioneins have a high content of cysteine residues that bind various heavy metals. The protein is Metallothionein (MT-A) of Ambystoma mexicanum (Axolotl).